We begin with the raw amino-acid sequence, 344 residues long: Dihydroorotase (344 aa).

The Zn(2+) site is built by histidine 14 and histidine 16. Substrate contacts are provided by residues 16–18 and asparagine 42; that span reads HFR. The Zn(2+) site is built by lysine 100, histidine 137, and histidine 175. At lysine 100 the chain carries N6-carboxylysine. Position 137 (histidine 137) interacts with substrate. Substrate is bound at residue leucine 220. Aspartate 248 is a binding site for Zn(2+). Aspartate 248 is a catalytic residue. Substrate contacts are provided by histidine 252 and alanine 264.

The protein belongs to the metallo-dependent hydrolases superfamily. DHOase family. Class II DHOase subfamily. As to quaternary structure, homodimer. It depends on Zn(2+) as a cofactor.

It carries out the reaction (S)-dihydroorotate + H2O = N-carbamoyl-L-aspartate + H(+). Its pathway is pyrimidine metabolism; UMP biosynthesis via de novo pathway; (S)-dihydroorotate from bicarbonate: step 3/3. Its function is as follows. Catalyzes the reversible cyclization of carbamoyl aspartate to dihydroorotate. The protein is Dihydroorotase of Erythrobacter litoralis (strain HTCC2594).